Consider the following 196-residue polypeptide: Imidazoleglycerol-phosphate dehydratase (196 aa).

Belongs to the imidazoleglycerol-phosphate dehydratase family.

Its subcellular location is the cytoplasm. The enzyme catalyses D-erythro-1-(imidazol-4-yl)glycerol 3-phosphate = 3-(imidazol-4-yl)-2-oxopropyl phosphate + H2O. It functions in the pathway amino-acid biosynthesis; L-histidine biosynthesis; L-histidine from 5-phospho-alpha-D-ribose 1-diphosphate: step 6/9. The chain is Imidazoleglycerol-phosphate dehydratase from Solidesulfovibrio magneticus (strain ATCC 700980 / DSM 13731 / RS-1) (Desulfovibrio magneticus).